Here is a 332-residue protein sequence, read N- to C-terminus: Methylthioribose-1-phosphate isomerase (332 aa).

Substrate-binding positions include 44 to 46 (RGA), R87, and Q192. The active-site Proton donor is the D233. 243–244 (NK) is a substrate binding site.

The protein belongs to the eIF-2B alpha/beta/delta subunits family. MtnA subfamily.

It carries out the reaction 5-(methylsulfanyl)-alpha-D-ribose 1-phosphate = 5-(methylsulfanyl)-D-ribulose 1-phosphate. Its pathway is amino-acid biosynthesis; L-methionine biosynthesis via salvage pathway; L-methionine from S-methyl-5-thio-alpha-D-ribose 1-phosphate: step 1/6. In terms of biological role, catalyzes the interconversion of methylthioribose-1-phosphate (MTR-1-P) into methylthioribulose-1-phosphate (MTRu-1-P). The protein is Methylthioribose-1-phosphate isomerase of Dehalococcoides mccartyi (strain CBDB1).